A 426-amino-acid polypeptide reads, in one-letter code: Histidine--tRNA ligase (426 aa).

This sequence belongs to the class-II aminoacyl-tRNA synthetase family. As to quaternary structure, homodimer.

Its subcellular location is the cytoplasm. The enzyme catalyses tRNA(His) + L-histidine + ATP = L-histidyl-tRNA(His) + AMP + diphosphate + H(+). The polypeptide is Histidine--tRNA ligase (Streptococcus agalactiae serotype Ia (strain ATCC 27591 / A909 / CDC SS700)).